An 82-amino-acid polypeptide reads, in one-letter code: RNA-binding protein Hfq (82 aa).

The region spanning 11–71 (DTFLNHVRKT…ISTIMPGAPI (61 aa)) is the Sm domain.

This sequence belongs to the Hfq family. As to quaternary structure, homohexamer.

RNA chaperone that binds small regulatory RNA (sRNAs) and mRNAs to facilitate mRNA translational regulation in response to envelope stress, environmental stress and changes in metabolite concentrations. Also binds with high specificity to tRNAs. The polypeptide is RNA-binding protein Hfq (Bradyrhizobium diazoefficiens (strain JCM 10833 / BCRC 13528 / IAM 13628 / NBRC 14792 / USDA 110)).